We begin with the raw amino-acid sequence, 83 residues long: Exodeoxyribonuclease 7 small subunit (83 aa).

This sequence belongs to the XseB family. Heterooligomer composed of large and small subunits.

It is found in the cytoplasm. It catalyses the reaction Exonucleolytic cleavage in either 5'- to 3'- or 3'- to 5'-direction to yield nucleoside 5'-phosphates.. Its function is as follows. Bidirectionally degrades single-stranded DNA into large acid-insoluble oligonucleotides, which are then degraded further into small acid-soluble oligonucleotides. In Rhizobium rhizogenes (strain K84 / ATCC BAA-868) (Agrobacterium radiobacter), this protein is Exodeoxyribonuclease 7 small subunit.